A 191-amino-acid chain; its full sequence is Fe/S biogenesis protein NfuA (191 aa).

[4Fe-4S] cluster-binding residues include Cys-149 and Cys-152.

It belongs to the NfuA family. Homodimer. [4Fe-4S] cluster is required as a cofactor.

Involved in iron-sulfur cluster biogenesis. Binds a 4Fe-4S cluster, can transfer this cluster to apoproteins, and thereby intervenes in the maturation of Fe/S proteins. Could also act as a scaffold/chaperone for damaged Fe/S proteins. In Yersinia pseudotuberculosis serotype O:1b (strain IP 31758), this protein is Fe/S biogenesis protein NfuA.